Reading from the N-terminus, the 410-residue chain is Beta-arrestin-1 (410 aa).

Residues 1 to 163 (MGDKGTRVFK…LEEKIHKRNS (163 aa)) form an interaction with SRC region. An interaction with CHRM2 region spans residues 45 to 86 (PEYLKERRVYVTLTCAFRYGREDLDVLGLTFRKDLFVANVQS). At Tyr-47 the chain carries Phosphotyrosine. Positions 250, 255, 324, and 326 each coordinate 1D-myo-inositol hexakisphosphate. Positions 318–410 (IVSYKVKVKL…GTGSPQLNNR (93 aa)) are interaction with TRAF6. The short motif at 385–395 (RQRLKGMKDDK) is the [DE]-X(1,2)-F-X-X-[FL]-X-X-X-R motif element. Residues 389–410 (KGMKDDKEEEENGTGSPQLNNR) are disordered. Polar residues predominate over residues 401–410 (GTGSPQLNNR). Ser-404 carries the phosphoserine; by GRK5 modification.

Belongs to the arrestin family. Monomer. Homodimer. Homooligomer; the self-association is mediated by InsP6-binding. Heterooligomer with ARRB2; the association is mediated by InsP6-binding. Interacts with ADRB2 (phosphorylated). Interacts with CHRM2 (phosphorylated). Interacts with LHCGR. Interacts with CYTH2 and CASR. Interacts with AP2B1 (dephosphorylated); phosphorylation of AP2B1 disrupts the interaction. Interacts (dephosphorylated at Ser-404) with CLTC. Interacts with CCR2 and GRK2. Interacts with CRR5. Interacts with PTAFR (phosphorylated on serine residues). Interacts with CLTC and MAP2K3. Interacts with CREB1. Interacts with TRAF6. Interacts with IGF1R and MDM2. Interacts with C5AR1. Interacts with PDE4D. Interacts with SRC (via the SH3 domain and the protein kinase domain); the interaction is independent of the phosphorylation state of SRC C-terminus. Interacts with TACR1. Interacts with RAF1. Interacts with CHUK, IKBKB and MAP3K14. Interacts with DVL1; the interaction is enhanced by phosphorylation of DVL1. Interacts with DVL2; the interaction is enhanced by phosphorylation of DVL2. Interacts with IGF1R. Associates with MAP kinase p38. Part of a MAPK signaling complex consisting of TACR1, ARRB1, SRC, MAPK1 (activated) and MAPK3 (activated). Part of a MAPK signaling complex consisting of F2RL1, ARRB1, RAF1, MAPK1 (activated) and MAPK3 (activated). Interacts with GPR143. Interacts with MAP2K4/MKK4. Interacts with HCK and CXCR1 (phosphorylated). Interacts with ACKR3 and ACKR4. Interacts with ARRDC1; the interaction is direct. Interacts with GPR61, GPR62 and GPR135. In terms of processing, constitutively phosphorylated at in the cytoplasm. At the plasma membrane, is rapidly dephosphorylated, a process that is required for clathrin binding and ADRB2 endocytosis but not for ADRB2 binding and desensitization. Once internalized, is rephosphorylated. Post-translationally, the ubiquitination status appears to regulate the formation and trafficking of beta-arrestin-GPCR complexes and signaling. Ubiquitination appears to occur GPCR-specific. Ubiquitinated by MDM2; the ubiquitination is required for rapid internalization of ADRB2. Deubiquitinated by USP33; the deubiquitination leads to a dissociation of the beta-arrestin-GPCR complex. Stimulation of a class A GPCR, such as ADRB2, induces transient ubiquitination and subsequently promotes association with USP33.

The protein resides in the cytoplasm. Its subcellular location is the nucleus. The protein localises to the cell membrane. It localises to the membrane. It is found in the clathrin-coated pit. The protein resides in the cell projection. Its subcellular location is the pseudopodium. The protein localises to the cytoplasmic vesicle. Its function is as follows. Functions in regulating agonist-mediated G-protein coupled receptor (GPCR) signaling by mediating both receptor desensitization and resensitization processes. During homologous desensitization, beta-arrestins bind to the GPRK-phosphorylated receptor and sterically preclude its coupling to the cognate G-protein; the binding appears to require additional receptor determinants exposed only in the active receptor conformation. The beta-arrestins target many receptors for internalization by acting as endocytic adapters (CLASPs, clathrin-associated sorting proteins) and recruiting the GPRCs to the adapter protein 2 complex 2 (AP-2) in clathrin-coated pits (CCPs). However, the extent of beta-arrestin involvement appears to vary significantly depending on the receptor, agonist and cell type. Internalized arrestin-receptor complexes traffic to intracellular endosomes, where they remain uncoupled from G-proteins. Two different modes of arrestin-mediated internalization occur. Class A receptors, like ADRB2, OPRM1, ENDRA, D1AR and ADRA1B dissociate from beta-arrestin at or near the plasma membrane and undergo rapid recycling. Class B receptors, like AVPR2, AGTR1, NTSR1, TRHR and TACR1 internalize as a complex with arrestin and traffic with it to endosomal vesicles, presumably as desensitized receptors, for extended periods of time. Receptor resensitization then requires that receptor-bound arrestin is removed so that the receptor can be dephosphorylated and returned to the plasma membrane. Involved in internalization of P2RY4 and UTP-stimulated internalization of P2RY2. Involved in phosphorylation-dependent internalization of OPRD1 ands subsequent recycling. Involved in the degradation of cAMP by recruiting cAMP phosphodiesterases to ligand-activated receptors. Beta-arrestins function as multivalent adapter proteins that can switch the GPCR from a G-protein signaling mode that transmits short-lived signals from the plasma membrane via small molecule second messengers and ion channels to a beta-arrestin signaling mode that transmits a distinct set of signals that are initiated as the receptor internalizes and transits the intracellular compartment. Acts as a signaling scaffold for MAPK pathways such as MAPK1/3 (ERK1/2). ERK1/2 activated by the beta-arrestin scaffold is largely excluded from the nucleus and confined to cytoplasmic locations such as endocytic vesicles, also called beta-arrestin signalosomes. Recruits c-Src/SRC to ADRB2 resulting in ERK activation. GPCRs for which the beta-arrestin-mediated signaling relies on both ARRB1 and ARRB2 (codependent regulation) include ADRB2, F2RL1 and PTH1R. For some GPCRs the beta-arrestin-mediated signaling relies on either ARRB1 or ARRB2 and is inhibited by the other respective beta-arrestin form (reciprocal regulation). Inhibits ERK1/2 signaling in AGTR1- and AVPR2-mediated activation (reciprocal regulation). Is required for SP-stimulated endocytosis of NK1R and recruits c-Src/SRC to internalized NK1R resulting in ERK1/2 activation, which is required for the antiapoptotic effects of SP. Is involved in proteinase-activated F2RL1-mediated ERK activity. Acts as a signaling scaffold for the AKT1 pathway. Is involved in alpha-thrombin-stimulated AKT1 signaling. Is involved in IGF1-stimulated AKT1 signaling leading to increased protection from apoptosis. Involved in activation of the p38 MAPK signaling pathway and in actin bundle formation. Involved in F2RL1-mediated cytoskeletal rearrangement and chemotaxis. Involved in AGTR1-mediated stress fiber formation by acting together with GNAQ to activate RHOA. Appears to function as signaling scaffold involved in regulation of MIP-1-beta-stimulated CCR5-dependent chemotaxis. Involved in attenuation of NF-kappa-B-dependent transcription in response to GPCR or cytokine stimulation by interacting with and stabilizing CHUK. May serve as nuclear messenger for GPCRs. Involved in OPRD1-stimulated transcriptional regulation by translocating to CDKN1B and FOS promoter regions and recruiting EP300 resulting in acetylation of histone H4. Involved in regulation of LEF1 transcriptional activity via interaction with DVL1 and/or DVL2 Also involved in regulation of receptors other than GPCRs. Involved in Toll-like receptor and IL-1 receptor signaling through the interaction with TRAF6 which prevents TRAF6 autoubiquitination and oligomerization required for activation of NF-kappa-B and JUN. Involved in IL8-mediated granule release in neutrophils. Binds phosphoinositides. Binds inositolhexakisphosphate (InsP6). Required for atypical chemokine receptor ACKR2-induced RAC1-LIMK1-PAK1-dependent phosphorylation of cofilin (CFL1) and for the up-regulation of ACKR2 from endosomal compartment to cell membrane, increasing its efficiency in chemokine uptake and degradation. Involved in the internalization of the atypical chemokine receptor ACKR3. Negatively regulates the NOTCH signaling pathway by mediating the ubiquitination and degradation of NOTCH1 by ITCH. Participates in the recruitment of the ubiquitin-protein ligase to the receptor. The protein is Beta-arrestin-1 (ARRB1) of Macaca fascicularis (Crab-eating macaque).